The primary structure comprises 251 residues: uncharacterized protein (251 aa).

4 disordered regions span residues 1-93 (MQPG…ASPG), 107-152 (GLRS…SRPQ), 169-188 (PSSI…VSLS), and 224-251 (LQAQ…STPS). A compositionally biased stretch (polar residues) spans 225–234 (QAQNLPSSGP).

This is an uncharacterized protein from Homo sapiens (Human).